Reading from the N-terminus, the 96-residue chain is Co-chaperonin GroES (96 aa).

It belongs to the GroES chaperonin family. Heptamer of 7 subunits arranged in a ring. Interacts with the chaperonin GroEL.

The protein resides in the cytoplasm. Functionally, together with the chaperonin GroEL, plays an essential role in assisting protein folding. The GroEL-GroES system forms a nano-cage that allows encapsulation of the non-native substrate proteins and provides a physical environment optimized to promote and accelerate protein folding. GroES binds to the apical surface of the GroEL ring, thereby capping the opening of the GroEL channel. This is Co-chaperonin GroES from Haemophilus influenzae (strain 86-028NP).